A 715-amino-acid chain; its full sequence is Fatty acid oxidation complex subunit alpha (715 aa).

Positions 1-190 are enoyl-CoA hydratase; it reads MDMTSAFTLN…RVGLVDEVVP (190 aa). A 3-hydroxyacyl-CoA dehydrogenase region spans residues 306-715; the sequence is GPLASVGVLG…WNSGETDLKE (410 aa).

The protein in the N-terminal section; belongs to the enoyl-CoA hydratase/isomerase family. It in the central section; belongs to the 3-hydroxyacyl-CoA dehydrogenase family. In terms of assembly, heterotetramer of two alpha chains (FadJ) and two beta chains (FadI).

Its subcellular location is the cytoplasm. It catalyses the reaction a (3S)-3-hydroxyacyl-CoA = a (2E)-enoyl-CoA + H2O. The enzyme catalyses a 4-saturated-(3S)-3-hydroxyacyl-CoA = a (3E)-enoyl-CoA + H2O. The catalysed reaction is a (3S)-3-hydroxyacyl-CoA + NAD(+) = a 3-oxoacyl-CoA + NADH + H(+). It carries out the reaction (3S)-3-hydroxybutanoyl-CoA = (3R)-3-hydroxybutanoyl-CoA. Its pathway is lipid metabolism; fatty acid beta-oxidation. Functionally, catalyzes the formation of a hydroxyacyl-CoA by addition of water on enoyl-CoA. Also exhibits 3-hydroxyacyl-CoA epimerase and 3-hydroxyacyl-CoA dehydrogenase activities. In Citrobacter koseri (strain ATCC BAA-895 / CDC 4225-83 / SGSC4696), this protein is Fatty acid oxidation complex subunit alpha.